The sequence spans 321 residues: Cytochrome f (321 aa).

The N-terminal stretch at M1–V35 is a signal peptide. Residues Y38, C58, C61, and H62 each contribute to the heme site. Residues M287 to K307 form a helical membrane-spanning segment.

It belongs to the cytochrome f family. In terms of assembly, the 4 large subunits of the cytochrome b6-f complex are cytochrome b6, subunit IV (17 kDa polypeptide, petD), cytochrome f and the Rieske protein, while the 4 small subunits are PetG, PetL, PetM and PetN. The complex functions as a dimer. Requires heme as cofactor.

It localises to the plastid. The protein resides in the chloroplast thylakoid membrane. In terms of biological role, component of the cytochrome b6-f complex, which mediates electron transfer between photosystem II (PSII) and photosystem I (PSI), cyclic electron flow around PSI, and state transitions. The polypeptide is Cytochrome f (Chara vulgaris (Common stonewort)).